The following is a 671-amino-acid chain: DNA ligase (671 aa).

Residues 32–36 (DAEYD), 81–82 (SL), and Glu-113 each bind NAD(+). Residue Lys-115 is the N6-AMP-lysine intermediate of the active site. NAD(+) contacts are provided by Arg-136, Glu-173, Lys-290, and Lys-314. Zn(2+) contacts are provided by Cys-408, Cys-411, Cys-426, and Cys-432. In terms of domain architecture, BRCT spans 593–671 (EIDSPFAGKT…EAEMIRLLGA (79 aa)).

Belongs to the NAD-dependent DNA ligase family. LigA subfamily. Mg(2+) serves as cofactor. It depends on Mn(2+) as a cofactor.

The catalysed reaction is NAD(+) + (deoxyribonucleotide)n-3'-hydroxyl + 5'-phospho-(deoxyribonucleotide)m = (deoxyribonucleotide)n+m + AMP + beta-nicotinamide D-nucleotide.. Functionally, DNA ligase that catalyzes the formation of phosphodiester linkages between 5'-phosphoryl and 3'-hydroxyl groups in double-stranded DNA using NAD as a coenzyme and as the energy source for the reaction. It is essential for DNA replication and repair of damaged DNA. In Salmonella gallinarum (strain 287/91 / NCTC 13346), this protein is DNA ligase.